An 86-amino-acid polypeptide reads, in one-letter code: Envelope glycoprotein N (86 aa).

The N-terminal stretch at Met1–Gly29 is a signal peptide. Over Glu30–Leu47 the chain is Virion surface. The chain crosses the membrane as a helical span at residues Lys48–Leu68. Residues Phe69–Tyr86 lie on the Intravirion side of the membrane.

Belongs to the herpesviridae glycoprotein N family. Interacts (via N-terminus) with gM (via N-terminus). The gM-gN heterodimer forms the gCII complex.

The protein resides in the virion membrane. It is found in the host membrane. It localises to the host Golgi apparatus. Its subcellular location is the host trans-Golgi network. Its function is as follows. Envelope glycoprotein necessary for proper maturation of gM and modulation of its membrane fusion activity. Also plays a critical role in virion morphogenesis. The chain is Envelope glycoprotein N from Homo sapiens (Human).